The sequence spans 346 residues: Serine/threonine-protein phosphatase PP1(4.8) (346 aa).

The segment at 46–65 is disordered; the sequence is QSAQTQESTPKTNGTGRATT. The Mn(2+) site is built by aspartate 102, histidine 104, aspartate 130, and asparagine 162. Histidine 163 acts as the Proton donor in catalysis. Mn(2+)-binding residues include histidine 211 and histidine 287.

The protein belongs to the PPP phosphatase family. PP-1 subfamily. It depends on Mn(2+) as a cofactor.

The enzyme catalyses O-phospho-L-seryl-[protein] + H2O = L-seryl-[protein] + phosphate. It carries out the reaction O-phospho-L-threonyl-[protein] + H2O = L-threonyl-[protein] + phosphate. This is Serine/threonine-protein phosphatase PP1(4.8) from Trypanosoma brucei brucei.